The primary structure comprises 257 residues: Type III pantothenate kinase (257 aa).

Position 6–13 (6–13) interacts with ATP; the sequence is DVGNTSTK. 109-112 provides a ligand contact to substrate; the sequence is GADR. The active-site Proton acceptor is Asp-111. Asp-132 contributes to the K(+) binding site. Residue Thr-135 coordinates ATP. Thr-187 is a binding site for substrate.

Belongs to the type III pantothenate kinase family. As to quaternary structure, homodimer. It depends on NH4(+) as a cofactor. The cofactor is K(+).

It localises to the cytoplasm. It catalyses the reaction (R)-pantothenate + ATP = (R)-4'-phosphopantothenate + ADP + H(+). Its pathway is cofactor biosynthesis; coenzyme A biosynthesis; CoA from (R)-pantothenate: step 1/5. Its function is as follows. Catalyzes the phosphorylation of pantothenate (Pan), the first step in CoA biosynthesis. This chain is Type III pantothenate kinase, found in Anaplasma marginale (strain Florida).